Reading from the N-terminus, the 299-residue chain is Hydroxymethylglutaryl-CoA lyase YngG (299 aa).

Residues 7-274 enclose the Pyruvate carboxyltransferase domain; it reads VTIKEVGPRD…KTNVKLEKLL (268 aa). Arg15 lines the substrate pocket. 3 residues coordinate a divalent metal cation: Asp16, His207, and His209. Cys240 is an active-site residue. Asn249 is a binding site for a divalent metal cation.

It belongs to the HMG-CoA lyase family. As to quaternary structure, homodimer and homotetramer.

It catalyses the reaction (3S)-3-hydroxy-3-methylglutaryl-CoA = acetoacetate + acetyl-CoA. Its pathway is metabolic intermediate metabolism; (S)-3-hydroxy-3-methylglutaryl-CoA degradation; acetoacetate from (S)-3-hydroxy-3-methylglutaryl-CoA: step 1/1. Involved in the catabolism of branched amino acids such as leucine. The polypeptide is Hydroxymethylglutaryl-CoA lyase YngG (yngG) (Bacillus subtilis (strain 168)).